The primary structure comprises 335 residues: MAISTFSIGDLGYLRNFLQNECNWFRICKKTFYREYRSVATSSPTFSLNNKPKKFCMHCEIVIFKRSEEFMFSLAVNGIHFGQFLTGKMKFNKKAVPEGLYYYILELGSITPIDLGFIPRYNSDCVTNMRCVTPEVIYENCSIVCPEEANRLTVKGSGDNKLTPLGGCGAWCLKNGGDLYIYTFALAYDLFLTCYDKSTFPSLAKIIFDMIACESEDCVFCKDHNKHVSQAGQIVGCVSNQETCFCYTSCKKKMANINNPELISLLCDQEINKIDIMYPKIKASLSLDINSYAHGYFGDDPYALKCVNWIPVRISAALSRLIVLSCPVCKRVVMD.

Belongs to the herpesviridae cytoplasmic envelopment protein 2 family. Interacts with cytoplasmic envelopment protein 3 and with the capsid.

It is found in the virion tegument. It localises to the host cytoplasm. Its subcellular location is the host nucleus. Its function is as follows. Plays a critical role in cytoplasmic virus egress. Participates in the final step of tegumentation and envelope acquisition within the host cytoplasm by directly interacting with the capsid. Upon virion binding to target cell, a signaling cascade is triggered to disrupt the interaction with the capsid, thereby preparing capsid uncoating. This Human herpesvirus 6A (strain Uganda-1102) (HHV-6 variant A) protein is Cytoplasmic envelopment protein 2 (U65).